The primary structure comprises 873 residues: K(+)/H(+) antiporter 1 (873 aa).

The Extracellular portion of the chain corresponds to 1 to 23 (MANTVGGILSGVNPFHYNSSSPL). A helical transmembrane segment spans residues 24-44 (TLFLFQACLILLVCNLIHIPF). Over 45–51 (SMMRQPK) the chain is Cytoplasmic. Residues 52-72 (VISEVISGVILGPTIFGQIPN) form a helical membrane-spanning segment. Over 73 to 82 (YTNTIFPTSS) the chain is Extracellular. A helical transmembrane segment spans residues 83-103 (IPGLNLVANLGIILFMFFLGL). The Cytoplasmic portion of the chain corresponds to 104–116 (EVDIAFIKKHLKK). A helical membrane pass occupies residues 117–137 (ALVIGIVTLAVPFGFGCLLAI). Over 138-154 (PLFHTYANKTEGERHIK) the chain is Extracellular. A helical transmembrane segment spans residues 155–175 (FSVFMVFIAVSISVTAFPVLC). Residues 176 to 188 (RILNELRLIKDRA) are Cytoplasmic-facing. The helical transmembrane segment at 189 to 209 (GIVVLAAGIINDIMGWILLAL) threads the bilayer. The Extracellular portion of the chain corresponds to 210–220 (SIILSSAEGSP). The helical transmembrane segment at 221–241 (VNTVYILLITFAWFLIYFFPL) threads the bilayer. Over 242-267 (KYLLRWVLIRTHELDRSKPSPLATMC) the chain is Cytoplasmic. The helical transmembrane segment at 268–288 (ILFIMFISAYFTDIIGVHPIF) threads the bilayer. Residues 289–316 (GAFIAGLVVPRDDHYVVKLTERMEDIPN) lie on the Extracellular side of the membrane. The helical transmembrane segment at 317–337 (IVFIPIYFAVAGLNVDLTLLN) threads the bilayer. Residues 338-341 (EGRD) lie on the Cytoplasmic side of the membrane. A helical membrane pass occupies residues 342–362 (WGYVFATIGIAIFTKIISGTL). Over 363-375 (TAKLTGLFWREAT) the chain is Extracellular. A helical transmembrane segment spans residues 376 to 396 (AAGVLMSCKGIVEIVVLTVGL). Residues 397 to 404 (NAGIISRK) lie on the Cytoplasmic side of the membrane. The chain crosses the membrane as a helical span at residues 405 to 425 (IFGMFVLMALVSTFVTTPLTQ). Residues 426–726 (LVYPDSYRDG…DRFKRKRFNL (301 aa)) lie on the Extracellular side of the membrane. A Phosphoserine modification is found at Ser-557. Residue Lys-562 forms a Glycyl lysine isopeptide (Lys-Gly) (interchain with G-Cter in ubiquitin) linkage. Residues 727–747 (LLPKPYLTQSDYLGLYLLLLI) traverse the membrane as a helical segment. The Cytoplasmic portion of the chain corresponds to 748–873 (CYRDGYNNDN…TLIVHHFSSE (126 aa)).

The protein belongs to the monovalent cation:proton antiporter 2 (CPA2) transporter (TC 2.A.37) family.

Its subcellular location is the membrane. Potassium-proton antiport. The chain is K(+)/H(+) antiporter 1 (KHA1) from Saccharomyces cerevisiae (strain ATCC 204508 / S288c) (Baker's yeast).